A 215-amino-acid chain; its full sequence is Protein C' (215 aa).

Residues 12 to 34 (MPSFLKKILKLRGRRQEDESRSR) form a disordered region. The involved in self-degradation and in host STAT1 degradation stretch occupies residues 15–22 (FLKKILKL).

Belongs to the respirovirus protein C family. As to quaternary structure, the different isoforms interact (via C-terminus) with unphosphorylated and phosphorylated human STAT1 (via N-terminus), favoring the formation of parallel STAT1 homodimers. The different isoforms do not interact with host STAT2. C protein interacts with L protein; this interaction has an inhibitory effect on viral transcription and replication. In terms of processing, protein Y2 is produced not only by alternative initiation, but also by proteolytic cleavage of C'. Only alternative initiation is detected in vitro, whereas in vivo cleavage seems to be predominant.

The protein resides in the host cytoplasm. Functionally, the different products prevent the establishment of cellular antiviral state by blocking the interferon-alpha/beta (IFN-alpha/beta) and IFN-gamma signaling pathways. They inhibit IFN-alpha/beta induced tyrosine phosphorylation of STAT1 and STAT2. Blocking the IFN-alpha/beta pathway requires binding to STAT1 in the cytoplasm. They inhibit IFN-gamma induced serine phosphorylation of STAT1. Block the IFN-gamma pathway by binding to and stabilizing the parallel form of the STAT1 dimer, further inducing high-molecular-weight complex formation and inhibition of transcription by IFN-gamma. May also have a role in preventing the cell to enter apoptosis. Modulate regulation of viral transcription and replication. Overexpression inhibits the viral RNA polymerase. The absence of all C', C and Y2 proteins leads to viral delayed growth. Plays an important role in virion particles release. Modulates virion shape. The protein is Protein C' (P/V/C) of Cavia cutleri (Guinea pig).